Reading from the N-terminus, the 379-residue chain is Succinyl-diaminopimelate desuccinylase (379 aa).

Residue H70 participates in Zn(2+) binding. The active site involves D72. Position 103 (D103) interacts with Zn(2+). The active-site Proton acceptor is the E137. 3 residues coordinate Zn(2+): E138, E166, and H352.

It belongs to the peptidase M20A family. DapE subfamily. As to quaternary structure, homodimer. Zn(2+) is required as a cofactor. Co(2+) serves as cofactor.

The enzyme catalyses N-succinyl-(2S,6S)-2,6-diaminopimelate + H2O = (2S,6S)-2,6-diaminopimelate + succinate. The protein operates within amino-acid biosynthesis; L-lysine biosynthesis via DAP pathway; LL-2,6-diaminopimelate from (S)-tetrahydrodipicolinate (succinylase route): step 3/3. In terms of biological role, catalyzes the hydrolysis of N-succinyl-L,L-diaminopimelic acid (SDAP), forming succinate and LL-2,6-diaminopimelate (DAP), an intermediate involved in the bacterial biosynthesis of lysine and meso-diaminopimelic acid, an essential component of bacterial cell walls. The polypeptide is Succinyl-diaminopimelate desuccinylase (Shewanella putrefaciens (strain CN-32 / ATCC BAA-453)).